The following is a 313-amino-acid chain: Porphobilinogen deaminase (313 aa).

Cys-242 is modified (S-(dipyrrolylmethanemethyl)cysteine).

The protein belongs to the HMBS family. In terms of assembly, monomer. Dipyrromethane serves as cofactor.

The enzyme catalyses 4 porphobilinogen + H2O = hydroxymethylbilane + 4 NH4(+). It functions in the pathway porphyrin-containing compound metabolism; protoporphyrin-IX biosynthesis; coproporphyrinogen-III from 5-aminolevulinate: step 2/4. Its function is as follows. Tetrapolymerization of the monopyrrole PBG into the hydroxymethylbilane pre-uroporphyrinogen in several discrete steps. The sequence is that of Porphobilinogen deaminase from Pseudomonas syringae pv. tomato (strain ATCC BAA-871 / DC3000).